Here is a 152-residue protein sequence, read N- to C-terminus: Globin CTT-E/E' (152 aa).

A signal peptide spans Met-1–Ala-15. One can recognise a Globin domain in the interval Leu-16–Met-152. Residues His-73 and His-102 each contribute to the heme b site.

It belongs to the globin family.

The chain is Globin CTT-E/E' (CTT-E) from Chironomus thummi thummi (Midge).